The sequence spans 289 residues: Orotidine 5'-phosphate decarboxylase (289 aa).

Residue lysine 97 is the Proton donor of the active site.

This sequence belongs to the OMP decarboxylase family. Type 2 subfamily.

It catalyses the reaction orotidine 5'-phosphate + H(+) = UMP + CO2. It functions in the pathway pyrimidine metabolism; UMP biosynthesis via de novo pathway; UMP from orotate: step 2/2. This is Orotidine 5'-phosphate decarboxylase from Petrotoga mobilis (strain DSM 10674 / SJ95).